The primary structure comprises 257 residues: Protein-tyrosine-phosphatase IBR5 (257 aa).

The Tyrosine-protein phosphatase domain occupies 49–185 (FPSEILPEFL…LQEFEQGIFG (137 aa)). Residue Cys-129 is the Phosphocysteine intermediate of the active site. Residues 235–257 (QEFTFGATPPKPTTGGDIAMDGS) form a disordered region.

Belongs to the protein-tyrosine phosphatase family. In terms of assembly, interacts with SKP1A/ASK1 and with MPK12. As to expression, expressed in root tips and vasculature, cotyledons, stems, leaves vasculature and hydathodes, flowers, siliques, and seeds.

The protein resides in the nucleus. The enzyme catalyses O-phospho-L-tyrosyl-[protein] + H2O = L-tyrosyl-[protein] + phosphate. Its function is as follows. Required for the transduction of auxin and abscisic acid (ABA) signaling pathways. Dephosphorylates and inactivates the MAP kinase MPK12. The protein is Protein-tyrosine-phosphatase IBR5 (IBR5) of Arabidopsis thaliana (Mouse-ear cress).